The chain runs to 370 residues: MSFDLTDHSHARYNPLTDSWILVSPHRAKRPWLGQQEKPGRNDAPDHDDKCYLCPGTTRATGEQNPDYESTYVFTNGYPAVKLEQPDPELTVSNCDALKERLFKLKGVKGNCYVICFSPKHNLSFPQMAQSEIMNVVKTWTNLFQTLEKEALEENKPYKYLQIFENKGTAMGCSNLHPHGQAWCLDSIPSEPAKEFDHFEKYEHQHGAHLLEDYVNLELREKERIVCENDSFLVVVPYWAVWPFETMVLSKRRIPSLNQFTDKEREDLASIIRNLTIRYDNLFETSFPYSMGLHQASLNATEGELKAAWFHMHFYPPLLRSATVRKFLVGFELLGQPQRDLTAEQAADRLKALSGEVHYLAKLEQEESKT.

Residues C51 and C54 each coordinate Zn(2+). Residues A60 and 76 to 77 (NG) each bind UDP-alpha-D-glucose. Zn(2+) is bound at residue H121. N166 is a binding site for UDP-alpha-D-glucose. Residue H177 coordinates Zn(2+). The Tele-UMP-histidine intermediate role is filled by H179. A UDP-alpha-D-glucose-binding site is contributed by Q181. 4 residues coordinate Fe cation: E195, H294, H311, and H313. UDP-alpha-D-glucose contacts are provided by residues 326–329 (KFLV) and 331–332 (FE).

This sequence belongs to the galactose-1-phosphate uridylyltransferase type 1 family. In terms of assembly, homodimer. Zn(2+) serves as cofactor.

The enzyme catalyses alpha-D-galactose 1-phosphate + UDP-alpha-D-glucose = alpha-D-glucose 1-phosphate + UDP-alpha-D-galactose. It participates in carbohydrate metabolism; galactose metabolism. The chain is Galactose-1-phosphate uridylyltransferase (GAL7) from Kluyveromyces lactis (strain ATCC 8585 / CBS 2359 / DSM 70799 / NBRC 1267 / NRRL Y-1140 / WM37) (Yeast).